Consider the following 440-residue polypeptide: tRNA-2-methylthio-N(6)-dimethylallyladenosine synthase (440 aa).

An MTTase N-terminal domain is found at 4-120 (NYVYIETFGC…LNDMVLAAER (117 aa)). Residues Cys13, Cys49, Cys83, Cys158, Cys162, and Cys165 each coordinate [4Fe-4S] cluster. One can recognise a Radical SAM core domain in the interval 144–374 (GTARISSFVT…QALQKRTTME (231 aa)). In terms of domain architecture, TRAM spans 377-439 (DVLLGTRQTV…QNSLLGELLP (63 aa)).

The protein belongs to the methylthiotransferase family. MiaB subfamily. Monomer. [4Fe-4S] cluster serves as cofactor.

Its subcellular location is the cytoplasm. The enzyme catalyses N(6)-dimethylallyladenosine(37) in tRNA + (sulfur carrier)-SH + AH2 + 2 S-adenosyl-L-methionine = 2-methylsulfanyl-N(6)-dimethylallyladenosine(37) in tRNA + (sulfur carrier)-H + 5'-deoxyadenosine + L-methionine + A + S-adenosyl-L-homocysteine + 2 H(+). Functionally, catalyzes the methylthiolation of N6-(dimethylallyl)adenosine (i(6)A), leading to the formation of 2-methylthio-N6-(dimethylallyl)adenosine (ms(2)i(6)A) at position 37 in tRNAs that read codons beginning with uridine. The sequence is that of tRNA-2-methylthio-N(6)-dimethylallyladenosine synthase from Pelobacter propionicus (strain DSM 2379 / NBRC 103807 / OttBd1).